Reading from the N-terminus, the 953-residue chain is Coatomer subunit beta (953 aa).

N-acetylthreonine is present on threonine 2. HEAT repeat units lie at residues 96–131 (HEMI…KEAE), 132–168 (LLEP…NFEH), 240–276 (SERA…SAPT), 277–314 (AIKA…HPAH), 316–353 (RVLQ…SRNV), and 396–433 (DMAA…RFDN). Residue lysine 494 is modified to N6-acetyllysine.

As to quaternary structure, oligomeric complex that consists of at least the alpha, beta, beta', gamma, delta, epsilon and zeta subunits. Interacts with ARF1 (myristoylated); this interaction is required for binding of COPB1 to Golgi membranes. Interacts with CAPN8 and PRKCE. Interacts with SCYL1. Interacts with COPG1. Interacts (via trunk domain) with ARF1 (via switch I region); the interaction is direct. Interacts with KCNK2 (via N-terminus); this interaction increases the channel-mediated whole cell currents and promotes plasma membrane expression of KCNK2. Interacts with STX17. Interacts with TMEM115. Interacts with TMEM41B. Proteolytically cleaved between Ser-528 and Ser-529 by CAPN8.

The protein resides in the cytoplasm. It is found in the cytosol. It localises to the golgi apparatus membrane. Its subcellular location is the cytoplasmic vesicle. The protein localises to the COPI-coated vesicle membrane. The protein resides in the cell membrane. It is found in the endoplasmic reticulum-Golgi intermediate compartment. Its function is as follows. The coatomer is a cytosolic protein complex that binds to dilysine motifs and reversibly associates with Golgi non-clathrin-coated vesicles, which further mediate biosynthetic protein transport from the ER, via the Golgi up to the trans Golgi network. Coatomer complex is required for budding from Golgi membranes, and is essential for the retrograde Golgi-to-ER transport of dilysine-tagged proteins. In mammals, the coatomer can only be recruited by membranes associated to ADP-ribosylation factors (ARFs), which are small GTP-binding proteins; the complex also influences the Golgi structural integrity, as well as the processing, activity, and endocytic recycling of LDL receptors. Involved in the Golgi disassembly and reassembly processes during cell cycle. Plays a functional role in facilitating the transport of kappa-type opioid receptor mRNAs into axons and enhances translation of these proteins. Required for limiting lipid storage in lipid droplets. Involved in lipid homeostasis by regulating the presence of perilipin family members PLIN2 and PLIN3 at the lipid droplet surface and promoting the association of adipocyte surface triglyceride lipase (PNPLA2) with the lipid droplet to mediate lipolysis. Involved in autophagy by playing a role in early endosome function. Plays a role in organellar compartmentalization of secretory compartments including endoplasmic reticulum (ER)-Golgi intermediate compartment (ERGIC), Golgi, trans-Golgi network (TGN) and recycling endosomes, and in biosynthetic transport of CAV1. In Bos taurus (Bovine), this protein is Coatomer subunit beta (COPB1).